The following is a 638-amino-acid chain: Chaperone protein DnaK (638 aa).

T198 carries the phosphothreonine; by autocatalysis modification. Residues 600 to 638 are disordered; the sequence is KTQTEGGAQPGAEADGDTGAKGGEKVVDADFEEVKDDKK. The segment covering 628–638 has biased composition (acidic residues); it reads ADFEEVKDDKK.

It belongs to the heat shock protein 70 family.

Acts as a chaperone. This Geobacter metallireducens (strain ATCC 53774 / DSM 7210 / GS-15) protein is Chaperone protein DnaK.